The following is a 265-amino-acid chain: Phosphate import ATP-binding protein PstB (265 aa).

Residues 18 to 260 (ISARDVQVFY…PEDPRTESYI (243 aa)) enclose the ABC transporter domain. 50–57 (GPSGCGKS) is an ATP binding site.

The protein belongs to the ABC transporter superfamily. Phosphate importer (TC 3.A.1.7) family. The complex is composed of two ATP-binding proteins (PstB), two transmembrane proteins (PstC and PstA) and a solute-binding protein (PstS).

The protein localises to the cell inner membrane. It carries out the reaction phosphate(out) + ATP + H2O = ADP + 2 phosphate(in) + H(+). Part of the ABC transporter complex PstSACB involved in phosphate import. Responsible for energy coupling to the transport system. The polypeptide is Phosphate import ATP-binding protein PstB (Roseobacter denitrificans (strain ATCC 33942 / OCh 114) (Erythrobacter sp. (strain OCh 114))).